The chain runs to 161 residues: Allophycocyanin subunit alpha-B (161 aa).

Asparagine 71 bears the N4-methylasparagine mark. Residue cysteine 81 participates in (2R,3E)-phycocyanobilin binding.

The protein belongs to the phycobiliprotein family. As to quaternary structure, heterodimer of an alpha-B and a beta chain forming AP-B. In terms of processing, contains one covalently linked bilin chromophore. The chromophore is added by phycocyanobilin lyase CpcUS.

Its subcellular location is the cellular thylakoid membrane. A variant alpha-allophycocyanin (AP) which forms a complex with beta-AP with maximum absorption at approximately 670 nanometers. It is an important phycobilisome terminal emitter involved in energy transfer to photosystem I. This chain is Allophycocyanin subunit alpha-B (apcD), found in Picosynechococcus sp. (strain ATCC 27264 / PCC 7002 / PR-6) (Agmenellum quadruplicatum).